A 222-amino-acid polypeptide reads, in one-letter code: Thiopurine S-methyltransferase (222 aa).

Residues Trp10, Leu45, Glu66, and Arg126 each contribute to the S-adenosyl-L-methionine site.

The protein belongs to the class I-like SAM-binding methyltransferase superfamily. TPMT family.

It localises to the cytoplasm. It catalyses the reaction S-adenosyl-L-methionine + a thiopurine = S-adenosyl-L-homocysteine + a thiopurine S-methylether.. The sequence is that of Thiopurine S-methyltransferase from Shewanella piezotolerans (strain WP3 / JCM 13877).